The primary structure comprises 285 residues: Orotidine 5'-phosphate decarboxylase (285 aa).

Residues aspartate 40, 62-64, 93-102, tyrosine 235, and arginine 253 each bind substrate; these read KTH and DRKFVDIGST. The Proton donor role is filled by lysine 95.

Belongs to the OMP decarboxylase family.

It carries out the reaction orotidine 5'-phosphate + H(+) = UMP + CO2. The protein operates within pyrimidine metabolism; UMP biosynthesis via de novo pathway; UMP from orotate: step 2/2. The polypeptide is Orotidine 5'-phosphate decarboxylase (URA3) (Paracoccidioides brasiliensis).